The following is a 745-amino-acid chain: 1,4-alpha-glucan branching enzyme GlgB (745 aa).

Asp416 functions as the Nucleophile in the catalytic mechanism. Glu469 acts as the Proton donor in catalysis.

Belongs to the glycosyl hydrolase 13 family. GlgB subfamily. Monomer.

It carries out the reaction Transfers a segment of a (1-&gt;4)-alpha-D-glucan chain to a primary hydroxy group in a similar glucan chain.. It functions in the pathway glycan biosynthesis; glycogen biosynthesis. Functionally, catalyzes the formation of the alpha-1,6-glucosidic linkages in glycogen by scission of a 1,4-alpha-linked oligosaccharide from growing alpha-1,4-glucan chains and the subsequent attachment of the oligosaccharide to the alpha-1,6 position. This chain is 1,4-alpha-glucan branching enzyme GlgB, found in Shewanella sp. (strain W3-18-1).